Here is a 975-residue protein sequence, read N- to C-terminus: Glycine dehydrogenase (decarboxylating) (975 aa).

Position 723 is an N6-(pyridoxal phosphate)lysine (lysine 723).

The protein belongs to the GcvP family. As to quaternary structure, the glycine cleavage system is composed of four proteins: P, T, L and H. Pyridoxal 5'-phosphate is required as a cofactor.

It catalyses the reaction N(6)-[(R)-lipoyl]-L-lysyl-[glycine-cleavage complex H protein] + glycine + H(+) = N(6)-[(R)-S(8)-aminomethyldihydrolipoyl]-L-lysyl-[glycine-cleavage complex H protein] + CO2. In terms of biological role, the glycine cleavage system catalyzes the degradation of glycine. The P protein binds the alpha-amino group of glycine through its pyridoxal phosphate cofactor; CO(2) is released and the remaining methylamine moiety is then transferred to the lipoamide cofactor of the H protein. The protein is Glycine dehydrogenase (decarboxylating) of Burkholderia orbicola (strain MC0-3).